We begin with the raw amino-acid sequence, 647 residues long: Putative ferric-chelate reductase 1 homolog (647 aa).

Residues 10-30 form a helical membrane-spanning segment; it reads WLATLVTALLAVAIWPDPGQS. The 171-residue stretch at 25–195 folds into the Reelin domain; sequence PDPGQSLPQG…AAPPLPTQSP (171 aa). Asn-127 and Asn-158 each carry an N-linked (GlcNAc...) asparagine glycan. Positions 245-368 constitute a DOMON domain; the sequence is TKSCTSITVV…GKYHLLVASG (124 aa). Residues 372 to 570 enclose the Cytochrome b561 domain; it reads KENSVGYHDI…HLIFSIGGMA (199 aa). The chain crosses the membrane as a helical span at residues 408–428; sequence LHGAFMIAAWIGTTSLGIIFA. Positions 409 and 450 each coordinate heme b. A run of 5 helical transmembrane segments spans residues 452-472, 480-500, 515-535, 548-568, and 616-636; these read LLMV…WVEL, HSII…GALF, GHWL…FFSV, WILV…SIGG, and LLGV…LLVV. Heme b-binding residues include His-480 and His-516.

It belongs to the FRRS1 family. It depends on heme b as a cofactor.

The protein localises to the membrane. Putative ferric-chelate reductases reduce Fe(3+) to Fe(2+) before its transport from the endosome to the cytoplasm. This chain is Putative ferric-chelate reductase 1 homolog, found in Drosophila melanogaster (Fruit fly).